The chain runs to 310 residues: Repression factor of MSEs protein 1 (310 aa).

Disordered stretches follow at residues 83–155 (TQEV…EANA) and 192–230 (DGIR…DEGE). Low complexity predominate over residues 92 to 106 (RNTSSSSSSTRSNSS). Residues 107-120 (ADISDTEYSGENTP) show a composition bias toward polar residues. Basic residues predominate over residues 127–136 (SRRRRTRSRA). Residues 139 to 155 (RENSLPASLPSISEANA) show a composition bias toward polar residues. The segment covering 192–208 (DGIRRRSSRISERDKRR) has biased composition (basic and acidic residues). Serine 215 carries the post-translational modification Phosphoserine.

As to quaternary structure, interacts directly with HST1 and SUM1. Required for the interaction between HST1 and SUM1.

The protein localises to the nucleus. Its function is as follows. Tethering factor required for histone deacetylase HST1-mediated repression. Probably involved in targeting HST1 to a subset of SUM1-regulated genes. The chain is Repression factor of MSEs protein 1 (RFM1) from Saccharomyces cerevisiae (strain ATCC 204508 / S288c) (Baker's yeast).